A 490-amino-acid polypeptide reads, in one-letter code: Prostaglandin E2 receptor EP4 subtype (490 aa).

Topologically, residues 1 to 19 (MSTPGVNASASLSPDRLNS) are extracellular. N7 carries an N-linked (GlcNAc...) asparagine glycan. The helical transmembrane segment at 20–43 (PVTIPAVMFIFGVVGNLVAIVVLC) threads the bilayer. Over 44-55 (KSRKEQKETTFY) the chain is Cytoplasmic. A helical membrane pass occupies residues 56–79 (TLVCGLAVTDLLGTLLVSPVTIAT). Residues 80–96 (YMKGQWPGGQPLCEYST) lie on the Extracellular side of the membrane. Residues C92 and C170 are joined by a disulfide bond. A helical transmembrane segment spans residues 97–115 (FILLFFSLSGLSIICAMSV). The Cytoplasmic segment spans residues 116-135 (ERYLAINHAYFYSHYVDKRL). Residues 136–160 (AGLTLFAVYASNVLFCALPNMGLGS) form a helical membrane-spanning segment. The Extracellular segment spans residues 161-184 (SRLQYPDTWCFIDWTTNVTAHAAY). The helical transmembrane segment at 185 to 211 (SYMYAGFSSFLILATVLCNVLVCGALL) threads the bilayer. The Cytoplasmic portion of the chain corresponds to 212–269 (RMHRQFMRRTSLGTEQHHAAAAAVTSVASRGHPAASPALPRLSDFRRRRSFRRIAGAE). Residues 270 to 297 (IQMVILLIATSLVVLICSIPLVVRVFVN) traverse the membrane as a helical segment. Residues 298 to 314 (QLYQPSLEREVSKNPDL) are Extracellular-facing. Residues 315 to 334 (QAIRIASVNPILDPWIYILL) form a helical membrane-spanning segment. Over 335 to 490 (RKTVLSKAIE…ETLNLSEKCI (156 aa)) the chain is Cytoplasmic. Positions 359–378 (ERSGQHCSDSQRTSSAMSGH) are disordered. Positions 363–378 (QHCSDSQRTSSAMSGH) are enriched in polar residues. Residues S376, S379, S381, and S384 each carry the phosphoserine modification. The segment covering 439 to 451 (SETSDSSQGQDSE) has biased composition (polar residues). A disordered region spans residues 439–477 (SETSDSSQGQDSESVLLVDEAGGSGRAGPAPKGSSLQVT).

It belongs to the G-protein coupled receptor 1 family. In terms of assembly, interacts with FEM1A. Post-translationally, phosphorylation mediates agonist-mediated desensitization by promoting cytoplasmic retention.

Its subcellular location is the cell membrane. Its function is as follows. Receptor for prostaglandin E2 (PGE2). The activity of this receptor is mediated by G(s) proteins that stimulate adenylate cyclase. Has a relaxing effect on smooth muscle. May play an important role in regulating renal hemodynamics, intestinal epithelial transport, adrenal aldosterone secretion, and uterine function. The polypeptide is Prostaglandin E2 receptor EP4 subtype (PTGER4) (Pan troglodytes (Chimpanzee)).